Reading from the N-terminus, the 95-residue chain is Large ribosomal subunit protein uL23 (95 aa).

This sequence belongs to the universal ribosomal protein uL23 family. In terms of assembly, part of the 50S ribosomal subunit. Contacts protein L29, and trigger factor when it is bound to the ribosome.

Functionally, one of the early assembly proteins it binds 23S rRNA. One of the proteins that surrounds the polypeptide exit tunnel on the outside of the ribosome. Forms the main docking site for trigger factor binding to the ribosome. This is Large ribosomal subunit protein uL23 from Thermodesulfovibrio yellowstonii (strain ATCC 51303 / DSM 11347 / YP87).